The following is a 129-amino-acid chain: Histone H2A type 2-C (129 aa).

Residues 1–22 (MSGRGKQGGKARAKAKSRSSRA) form a disordered region. At serine 2 the chain carries N-acetylserine. Serine 2 is modified (phosphoserine; by RPS6KA5). Position 4 is a citrulline; alternate (arginine 4). Arginine 4 carries the post-translational modification Symmetric dimethylarginine; by PRMT5; alternate. Residues lysine 6 and lysine 10 each carry the N6-(2-hydroxyisobutyryl)lysine; alternate modification. Residue lysine 6 is modified to N6-acetyllysine; alternate. The segment covering 7 to 19 (QGGKARAKAKSRS) has biased composition (basic residues). Residue lysine 10 is modified to N6-lactoyllysine; alternate. At lysine 10 the chain carries N6-succinyllysine; alternate. Glycyl lysine isopeptide (Lys-Gly) (interchain with G-Cter in ubiquitin) cross-links involve residues lysine 14 and lysine 16. Residue lysine 37 is modified to N6-(2-hydroxyisobutyryl)lysine; alternate. Lysine 37 carries the post-translational modification N6-(beta-hydroxybutyryl)lysine; alternate. Residue lysine 37 is modified to N6-crotonyllysine; alternate. 2 positions are modified to N6-(2-hydroxyisobutyryl)lysine: lysine 75 and lysine 76. Lysine 96 is modified (N6-(2-hydroxyisobutyryl)lysine; alternate). Lysine 96 carries the post-translational modification N6-succinyllysine; alternate. N6-glutaryllysine; alternate is present on lysine 96. N6-glutaryllysine is present on lysine 100. An N5-methylglutamine modification is found at glutamine 105. Lysine 119 bears the N6-(2-hydroxyisobutyryl)lysine; alternate mark. Lysine 119 and lysine 120 each carry N6-crotonyllysine; alternate. N6-glutaryllysine; alternate occurs at positions 119 and 120. Lysine 120 is covalently cross-linked (Glycyl lysine isopeptide (Lys-Gly) (interchain with G-Cter in ubiquitin); alternate). Residue threonine 121 is modified to Phosphothreonine; by DCAF1. Phosphoserine is present on serine 123. Lysine 125 carries the N6-crotonyllysine modification.

Belongs to the histone H2A family. The nucleosome is a histone octamer containing two molecules each of H2A, H2B, H3 and H4 assembled in one H3-H4 heterotetramer and two H2A-H2B heterodimers. The octamer wraps approximately 147 bp of DNA. Deiminated on Arg-4 in granulocytes upon calcium entry. In terms of processing, monoubiquitination of Lys-120 (H2AK119Ub) by RING1, TRIM37 and RNF2/RING2 complex gives a specific tag for epigenetic transcriptional repression and participates in X chromosome inactivation of female mammals. It is involved in the initiation of both imprinted and random X inactivation. Ubiquitinated H2A is enriched in inactive X chromosome chromatin. Ubiquitination of H2A functions downstream of methylation of 'Lys-27' of histone H3 (H3K27me). H2AK119Ub by RNF2/RING2 can also be induced by ultraviolet and may be involved in DNA repair. Following DNA double-strand breaks (DSBs), it is ubiquitinated through 'Lys-63' linkage of ubiquitin moieties by the E2 ligase UBE2N and the E3 ligases RNF8 and RNF168, leading to the recruitment of repair proteins to sites of DNA damage. Ubiquitination at Lys-14 and Lys-16 (H2AK13Ub and H2AK15Ub, respectively) in response to DNA damage is initiated by RNF168 that mediates monoubiquitination at these 2 sites, and 'Lys-63'-linked ubiquitin are then conjugated to monoubiquitin; RNF8 is able to extend 'Lys-63'-linked ubiquitin chains in vitro. H2AK119Ub and ionizing radiation-induced 'Lys-63'-linked ubiquitination (H2AK13Ub and H2AK15Ub) are distinct events. Post-translationally, phosphorylation on Ser-2 (H2AS1ph) is enhanced during mitosis. Phosphorylation on Ser-2 by RPS6KA5/MSK1 directly represses transcription. Acetylation of H3 inhibits Ser-2 phosphorylation by RPS6KA5/MSK1. Phosphorylation at Thr-121 (H2AT120ph) by DCAF1 is present in the regulatory region of many tumor suppresor genes and down-regulates their transcription. Symmetric dimethylation on Arg-4 by the PRDM1/PRMT5 complex may play a crucial role in the germ-cell lineage. In terms of processing, glutamine methylation at Gln-105 (H2AQ104me) by FBL is specifically dedicated to polymerase I. It is present at 35S ribosomal DNA locus and impairs binding of the FACT complex. Post-translationally, crotonylation (Kcr) is specifically present in male germ cells and marks testis-specific genes in post-meiotic cells, including X-linked genes that escape sex chromosome inactivation in haploid cells. Crotonylation marks active promoters and enhancers and confers resistance to transcriptional repressors. It is also associated with post-meiotically activated genes on autosomes. Lactylated in macrophages by EP300/P300 by using lactoyl-CoA directly derived from endogenous or exogenous lactate, leading to stimulates gene transcription.

The protein resides in the nucleus. It localises to the chromosome. Core component of nucleosome. Nucleosomes wrap and compact DNA into chromatin, limiting DNA accessibility to the cellular machineries which require DNA as a template. Histones thereby play a central role in transcription regulation, DNA repair, DNA replication and chromosomal stability. DNA accessibility is regulated via a complex set of post-translational modifications of histones, also called histone code, and nucleosome remodeling. The protein is Histone H2A type 2-C of Bos taurus (Bovine).